The sequence spans 214 residues: Probable nicotinate-nucleotide adenylyltransferase (214 aa).

It belongs to the NadD family.

It catalyses the reaction nicotinate beta-D-ribonucleotide + ATP + H(+) = deamido-NAD(+) + diphosphate. The protein operates within cofactor biosynthesis; NAD(+) biosynthesis; deamido-NAD(+) from nicotinate D-ribonucleotide: step 1/1. Catalyzes the reversible adenylation of nicotinate mononucleotide (NaMN) to nicotinic acid adenine dinucleotide (NaAD). This chain is Probable nicotinate-nucleotide adenylyltransferase, found in Buchnera aphidicola subsp. Acyrthosiphon pisum (strain 5A).